The sequence spans 128 residues: Small ribosomal subunit protein uS9 (128 aa).

Belongs to the universal ribosomal protein uS9 family. Part of the 30S ribosomal subunit. Contacts proteins S7 and S10.

Functionally, part of the top of the head of the 30S subunit. The C-terminal region penetrates the head emerging in the P-site where it contacts tRNA. This chain is Small ribosomal subunit protein uS9 (rpsI), found in Thermus thermophilus (strain ATCC BAA-163 / DSM 7039 / HB27).